The chain runs to 72 residues: Translation initiation factor IF-1 (72 aa).

The S1-like domain occupies 2 to 72 (AKEDVIEIQG…TKGRITYRFK (71 aa)).

Belongs to the IF-1 family. Component of the 30S ribosomal translation pre-initiation complex which assembles on the 30S ribosome in the order IF-2 and IF-3, IF-1 and N-formylmethionyl-tRNA(fMet); mRNA recruitment can occur at any time during PIC assembly.

The protein resides in the cytoplasm. Its function is as follows. One of the essential components for the initiation of protein synthesis. Stabilizes the binding of IF-2 and IF-3 on the 30S subunit to which N-formylmethionyl-tRNA(fMet) subsequently binds. Helps modulate mRNA selection, yielding the 30S pre-initiation complex (PIC). Upon addition of the 50S ribosomal subunit IF-1, IF-2 and IF-3 are released leaving the mature 70S translation initiation complex. The chain is Translation initiation factor IF-1 from Lactiplantibacillus plantarum (strain ATCC BAA-793 / NCIMB 8826 / WCFS1) (Lactobacillus plantarum).